The sequence spans 891 residues: Alanine--tRNA ligase (891 aa).

Zn(2+) is bound by residues His574, His578, Cys676, and His680.

This sequence belongs to the class-II aminoacyl-tRNA synthetase family. Zn(2+) serves as cofactor.

Its subcellular location is the cytoplasm. It catalyses the reaction tRNA(Ala) + L-alanine + ATP = L-alanyl-tRNA(Ala) + AMP + diphosphate. Catalyzes the attachment of alanine to tRNA(Ala) in a two-step reaction: alanine is first activated by ATP to form Ala-AMP and then transferred to the acceptor end of tRNA(Ala). Also edits incorrectly charged Ser-tRNA(Ala) and Gly-tRNA(Ala) via its editing domain. This is Alanine--tRNA ligase from Synechococcus sp. (strain WH7803).